Here is a 470-residue protein sequence, read N- to C-terminus: Xaa-Pro aminopeptidase 2 (470 aa).

Residues Asp-287, Asp-299, His-382, Glu-413, and Glu-437 each coordinate Mn(2+).

Belongs to the peptidase M24B family. In terms of assembly, homodimer. Requires Mn(2+) as cofactor.

It catalyses the reaction Release of any N-terminal amino acid, including proline, that is linked to proline, even from a dipeptide or tripeptide.. This is Xaa-Pro aminopeptidase 2 (pepP2) from Streptomyces coelicolor (strain ATCC BAA-471 / A3(2) / M145).